A 328-amino-acid polypeptide reads, in one-letter code: Phosphate acyltransferase (328 aa).

This sequence belongs to the PlsX family. In terms of assembly, homodimer. Probably interacts with PlsY.

It localises to the cytoplasm. The enzyme catalyses a fatty acyl-[ACP] + phosphate = an acyl phosphate + holo-[ACP]. It participates in lipid metabolism; phospholipid metabolism. In terms of biological role, catalyzes the reversible formation of acyl-phosphate (acyl-PO(4)) from acyl-[acyl-carrier-protein] (acyl-ACP). This enzyme utilizes acyl-ACP as fatty acyl donor, but not acyl-CoA. The protein is Phosphate acyltransferase of Campylobacter jejuni (strain RM1221).